Consider the following 224-residue polypeptide: Putative O-methyltransferase MUL_4520 (224 aa).

The span at 1 to 11 (MHGTDSSSDTP) shows a compositional bias: polar residues. The interval 1–20 (MHGTDSSSDTPGQPAPSRAE) is disordered. S-adenosyl-L-methionine contacts are provided by residues Val51, Glu73, 75–76 (GT), Ser81, Asp99, and Ile100. Asp147 serves as a coordination point for substrate. An S-adenosyl-L-methionine-binding site is contributed by Asp149.

This sequence belongs to the class I-like SAM-binding methyltransferase superfamily. Cation-dependent O-methyltransferase family.

The protein is Putative O-methyltransferase MUL_4520 of Mycobacterium ulcerans (strain Agy99).